The chain runs to 228 residues: Phosphoribosylformylglycinamidine synthase subunit PurQ (228 aa).

The region spanning 3–226 (FAVVVFPGSN…VTYWRDAHVV (224 aa)) is the Glutamine amidotransferase type-1 domain. Cys-86 (nucleophile) is an active-site residue. Residues His-195 and Glu-197 contribute to the active site.

Part of the FGAM synthase complex composed of 1 PurL, 1 PurQ and 2 PurS subunits.

The protein localises to the cytoplasm. It catalyses the reaction N(2)-formyl-N(1)-(5-phospho-beta-D-ribosyl)glycinamide + L-glutamine + ATP + H2O = 2-formamido-N(1)-(5-O-phospho-beta-D-ribosyl)acetamidine + L-glutamate + ADP + phosphate + H(+). The enzyme catalyses L-glutamine + H2O = L-glutamate + NH4(+). Its pathway is purine metabolism; IMP biosynthesis via de novo pathway; 5-amino-1-(5-phospho-D-ribosyl)imidazole from N(2)-formyl-N(1)-(5-phospho-D-ribosyl)glycinamide: step 1/2. Its function is as follows. Part of the phosphoribosylformylglycinamidine synthase complex involved in the purines biosynthetic pathway. Catalyzes the ATP-dependent conversion of formylglycinamide ribonucleotide (FGAR) and glutamine to yield formylglycinamidine ribonucleotide (FGAM) and glutamate. The FGAM synthase complex is composed of three subunits. PurQ produces an ammonia molecule by converting glutamine to glutamate. PurL transfers the ammonia molecule to FGAR to form FGAM in an ATP-dependent manner. PurS interacts with PurQ and PurL and is thought to assist in the transfer of the ammonia molecule from PurQ to PurL. The sequence is that of Phosphoribosylformylglycinamidine synthase subunit PurQ from Anoxybacillus flavithermus (strain DSM 21510 / WK1).